Reading from the N-terminus, the 149-residue chain is Sec-independent protein translocase protein TatB (149 aa).

A helical transmembrane segment spans residues 1-22; that stretch reads MFDGIGFMELLLIGVLGLIVLG. The span at 86 to 113 shows a compositional bias: polar residues; that stretch reads LKQAAQSVNRPYQVQDTPSAQDNQIHNP. The disordered stretch occupies residues 86 to 149; sequence LKQAAQSVNR…DPRSNTKANG (64 aa). A compositionally biased stretch (low complexity) spans 114 to 135; the sequence is ASQTVSTEASSTSASSAPKSES.

Belongs to the TatB family. As to quaternary structure, the Tat system comprises two distinct complexes: a TatABC complex, containing multiple copies of TatA, TatB and TatC subunits, and a separate TatA complex, containing only TatA subunits. Substrates initially bind to the TatABC complex, which probably triggers association of the separate TatA complex to form the active translocon.

It is found in the cell inner membrane. Its function is as follows. Part of the twin-arginine translocation (Tat) system that transports large folded proteins containing a characteristic twin-arginine motif in their signal peptide across membranes. Together with TatC, TatB is part of a receptor directly interacting with Tat signal peptides. TatB may form an oligomeric binding site that transiently accommodates folded Tat precursor proteins before their translocation. This chain is Sec-independent protein translocase protein TatB, found in Shewanella oneidensis (strain ATCC 700550 / JCM 31522 / CIP 106686 / LMG 19005 / NCIMB 14063 / MR-1).